The sequence spans 389 residues: F-box protein At3g19880 (389 aa).

The region spanning Thr-2 to Lys-49 is the F-box domain.

This chain is F-box protein At3g19880, found in Arabidopsis thaliana (Mouse-ear cress).